The primary structure comprises 129 residues: Large ribosomal subunit protein uL22 (129 aa).

Belongs to the universal ribosomal protein uL22 family. Part of the 50S ribosomal subunit.

This protein binds specifically to 23S rRNA; its binding is stimulated by other ribosomal proteins, e.g. L4, L17, and L20. It is important during the early stages of 50S assembly. It makes multiple contacts with different domains of the 23S rRNA in the assembled 50S subunit and ribosome. Its function is as follows. The globular domain of the protein is located near the polypeptide exit tunnel on the outside of the subunit, while an extended beta-hairpin is found that lines the wall of the exit tunnel in the center of the 70S ribosome. This is Large ribosomal subunit protein uL22 from Bartonella quintana (strain Toulouse) (Rochalimaea quintana).